We begin with the raw amino-acid sequence, 447 residues long: Cobyrinate a,c-diamide synthase (447 aa).

One can recognise a GATase cobBQ-type domain in the interval 252–439 (KIAVAFDESF…AHQHCIGNPY (188 aa)). Catalysis depends on cysteine 331, which acts as the Nucleophile.

Belongs to the CobB/CbiA family. It depends on Mg(2+) as a cofactor.

It catalyses the reaction cob(II)yrinate + 2 L-glutamine + 2 ATP + 2 H2O = cob(II)yrinate a,c diamide + 2 L-glutamate + 2 ADP + 2 phosphate + 2 H(+). The enzyme catalyses Ni-sirohydrochlorin + 2 L-glutamine + 2 ATP + 2 H2O = Ni-sirohydrochlorin a,c-diamide + 2 L-glutamate + 2 ADP + 2 phosphate + 2 H(+). It participates in cofactor biosynthesis; adenosylcobalamin biosynthesis; cob(II)yrinate a,c-diamide from sirohydrochlorin (anaerobic route): step 10/10. In terms of biological role, catalyzes the ATP-dependent amidation of the two carboxylate groups at positions a and c of cobyrinate, using either L-glutamine or ammonia as the nitrogen source. Involved in the biosynthesis of the unique nickel-containing tetrapyrrole coenzyme F430, the prosthetic group of methyl-coenzyme M reductase (MCR), which plays a key role in methanogenesis and anaerobic methane oxidation. Catalyzes the ATP-dependent amidation of the two carboxylate groups at positions a and c of Ni-sirohydrochlorin, using L-glutamine or ammonia as the nitrogen source. This is Cobyrinate a,c-diamide synthase from Methanococcus maripaludis (strain C5 / ATCC BAA-1333).